The chain runs to 110 residues: NADH-quinone oxidoreductase subunit K (110 aa).

Helical transmembrane passes span 14 to 34 (VSQY…GMMV), 39 to 59 (ITIL…FVGI), and 70 to 90 (IFAL…LGII).

This sequence belongs to the complex I subunit 4L family. NDH-1 is composed of 14 different subunits. Subunits NuoA, H, J, K, L, M, N constitute the membrane sector of the complex.

Its subcellular location is the cell inner membrane. The catalysed reaction is a quinone + NADH + 5 H(+)(in) = a quinol + NAD(+) + 4 H(+)(out). NDH-1 shuttles electrons from NADH, via FMN and iron-sulfur (Fe-S) centers, to quinones in the respiratory chain. The immediate electron acceptor for the enzyme in this species is believed to be ubiquinone. Couples the redox reaction to proton translocation (for every two electrons transferred, four hydrogen ions are translocated across the cytoplasmic membrane), and thus conserves the redox energy in a proton gradient. The sequence is that of NADH-quinone oxidoreductase subunit K from Hydrogenobaculum sp. (strain Y04AAS1).